Here is a 189-residue protein sequence, read N- to C-terminus: UPF0149 protein VFMJ11_2207 (189 aa).

The protein belongs to the UPF0149 family.

The sequence is that of UPF0149 protein VFMJ11_2207 from Aliivibrio fischeri (strain MJ11) (Vibrio fischeri).